The following is a 520-amino-acid chain: Zinc finger and BTB domain-containing protein 45 (520 aa).

Residues 33 to 96 (CDVTVRIREA…LYSGSLVVAQ (64 aa)) form the BTB domain. 2 disordered regions span residues 182 to 272 (PAPP…GGAG) and 337 to 372 (FHLG…PDAA). Residues 206–225 (RGEEDDDEETDEETDAEEGE) are compositionally biased toward acidic residues. The segment covering 342 to 363 (PGPPAPTPPTPSGPAPAPPPTF) has biased composition (pro residues). 4 consecutive C2H2-type zinc fingers follow at residues 412–434 (YECS…MFIH), 440–462 (HQCA…MVTH), 468–490 (FQCA…MRTH), and 495–517 (APCP…LAAH).

Belongs to the krueppel C2H2-type zinc-finger protein family.

Its subcellular location is the nucleus. In terms of biological role, may be involved in transcriptional regulation. In the central nervous system, may play a role in glial cell differentiation. The sequence is that of Zinc finger and BTB domain-containing protein 45 from Mus musculus (Mouse).